The primary structure comprises 492 residues: Glutamyl-tRNA(Gln) amidotransferase subunit A (492 aa).

Catalysis depends on charge relay system residues Lys79 and Ser154. The active-site Acyl-ester intermediate is the Ser178.

Belongs to the amidase family. GatA subfamily. Heterotrimer of A, B and C subunits.

It carries out the reaction L-glutamyl-tRNA(Gln) + L-glutamine + ATP + H2O = L-glutaminyl-tRNA(Gln) + L-glutamate + ADP + phosphate + H(+). Allows the formation of correctly charged Gln-tRNA(Gln) through the transamidation of misacylated Glu-tRNA(Gln) in organisms which lack glutaminyl-tRNA synthetase. The reaction takes place in the presence of glutamine and ATP through an activated gamma-phospho-Glu-tRNA(Gln). This Desulforudis audaxviator (strain MP104C) protein is Glutamyl-tRNA(Gln) amidotransferase subunit A.